The primary structure comprises 471 residues: Cell division protein FtsP (471 aa).

The segment at residues M1 to A27 is a signal peptide (tat-type signal). A Plastocyanin-like domain is found at V229 to G288.

Belongs to the FtsP family. Predicted to be exported by the Tat system. The position of the signal peptide cleavage has not been experimentally proven.

Its subcellular location is the periplasm. Functionally, cell division protein that is required for growth during stress conditions. May be involved in protecting or stabilizing the divisomal assembly under conditions of stress. This is Cell division protein FtsP from Rahnella sp. (strain Y9602).